Here is a 176-residue protein sequence, read N- to C-terminus: Large ribosomal subunit protein eL20 (176 aa).

A Glycyl lysine isopeptide (Lys-Gly) (interchain with G-Cter in SUMO2) cross-link involves residue K11. Y63 carries the phosphotyrosine modification. The residue at position 71 (S71) is a Phosphoserine. K76 is subject to N6-succinyllysine. A Phosphoserine modification is found at S123. Glycyl lysine isopeptide (Lys-Gly) (interchain with G-Cter in SUMO2) cross-links involve residues K128 and K170.

This sequence belongs to the eukaryotic ribosomal protein eL20 family. In terms of assembly, component of the large ribosomal subunit. Binds IPO9 with high affinity.

Its subcellular location is the cytoplasm. Component of the large ribosomal subunit. The ribosome is a large ribonucleoprotein complex responsible for the synthesis of proteins in the cell. The polypeptide is Large ribosomal subunit protein eL20 (Rpl18a) (Mus musculus (Mouse)).